An 88-amino-acid chain; its full sequence is UPF0297 protein LACR_0137 (88 aa).

The protein belongs to the UPF0297 family.

This chain is UPF0297 protein LACR_0137, found in Lactococcus lactis subsp. cremoris (strain SK11).